The primary structure comprises 137 residues: Small ribosomal subunit protein bS16m (137 aa).

Residues 1-34 (MVHLTTLLCKAYRGGHLTIRLALGGCTNRPFYRI) constitute a mitochondrion transit peptide. T130 carries the post-translational modification Phosphothreonine.

Belongs to the bacterial ribosomal protein bS16 family. Component of the mitochondrial ribosome small subunit (28S) which comprises a 12S rRNA and about 30 distinct proteins.

Its subcellular location is the mitochondrion. The protein is Small ribosomal subunit protein bS16m (MRPS16) of Pongo abelii (Sumatran orangutan).